Consider the following 170-residue polypeptide: Probable chorismate pyruvate-lyase (170 aa).

Arginine 77, leucine 114, and glutamate 157 together coordinate substrate.

This sequence belongs to the UbiC family.

It localises to the cytoplasm. The catalysed reaction is chorismate = 4-hydroxybenzoate + pyruvate. Its pathway is cofactor biosynthesis; ubiquinone biosynthesis. Removes the pyruvyl group from chorismate, with concomitant aromatization of the ring, to provide 4-hydroxybenzoate (4HB) for the ubiquinone pathway. The protein is Probable chorismate pyruvate-lyase of Pasteurella multocida (strain Pm70).